We begin with the raw amino-acid sequence, 206 residues long: Small ribosomal subunit protein uS5 (206 aa).

The segment covering 1 to 23 (MTDTPTKQENQSKTENPPSSNAN) has biased composition (polar residues). The disordered stretch occupies residues 1 to 52 (MTDTPTKQENQSKTENPPSSNANEQRRGNRNNDRKRNRRGDSKNERDSEWQE). The segment covering 24 to 52 (EQRRGNRNNDRKRNRRGDSKNERDSEWQE) has biased composition (basic and acidic residues). An S5 DRBM domain is found at 50-113 (WQERVVQIRR…SDGKKHLVRV (64 aa)).

Belongs to the universal ribosomal protein uS5 family. As to quaternary structure, part of the 30S ribosomal subunit. Contacts proteins S4 and S8.

In terms of biological role, with S4 and S12 plays an important role in translational accuracy. Located at the back of the 30S subunit body where it stabilizes the conformation of the head with respect to the body. The polypeptide is Small ribosomal subunit protein uS5 (Prochlorococcus marinus subsp. pastoris (strain CCMP1986 / NIES-2087 / MED4)).